Consider the following 380-residue polypeptide: Probable dual-specificity RNA methyltransferase RlmN (380 aa).

E123 acts as the Proton acceptor in catalysis. The Radical SAM core domain maps to 129 to 362; the sequence is HEYGNSVCVT…VTIRREQGSD (234 aa). A disulfide bond links C136 and C367. Residues C143, C147, and C150 each contribute to the [4Fe-4S] cluster site. S-adenosyl-L-methionine is bound by residues 193–194, S225, 248–250, and N324; these read GE and SLH. Residue C367 is the S-methylcysteine intermediate of the active site.

This sequence belongs to the radical SAM superfamily. RlmN family. The cofactor is [4Fe-4S] cluster.

Its subcellular location is the cytoplasm. The enzyme catalyses adenosine(2503) in 23S rRNA + 2 reduced [2Fe-2S]-[ferredoxin] + 2 S-adenosyl-L-methionine = 2-methyladenosine(2503) in 23S rRNA + 5'-deoxyadenosine + L-methionine + 2 oxidized [2Fe-2S]-[ferredoxin] + S-adenosyl-L-homocysteine. It catalyses the reaction adenosine(37) in tRNA + 2 reduced [2Fe-2S]-[ferredoxin] + 2 S-adenosyl-L-methionine = 2-methyladenosine(37) in tRNA + 5'-deoxyadenosine + L-methionine + 2 oxidized [2Fe-2S]-[ferredoxin] + S-adenosyl-L-homocysteine. Specifically methylates position 2 of adenine 2503 in 23S rRNA and position 2 of adenine 37 in tRNAs. This is Probable dual-specificity RNA methyltransferase RlmN from Lysinibacillus sphaericus (strain C3-41).